The following is a 339-amino-acid chain: HTH-type transcriptional regulator SyrM 2 (339 aa).

The region spanning V32–T89 is the HTH lysR-type domain. Residues I49–S68 constitute a DNA-binding region (H-T-H motif).

It belongs to the LysR transcriptional regulatory family.

Its function is as follows. Acts in trans to stimulate nod gene expression. This is HTH-type transcriptional regulator SyrM 2 (syrM2) from Sinorhizobium fredii (strain NBRC 101917 / NGR234).